A 542-amino-acid polypeptide reads, in one-letter code: 1,3-beta-glucanosyltransferase gas1 (542 aa).

An N-terminal signal peptide occupies residues Met-1–Ala-19. Asn-35 is a glycosylation site (N-linked (GlcNAc...) asparagine). The cysteines at positions 70 and 99 are disulfide-linked. Tyr-88 is a (1,3-beta-D-glucosyl)n binding site. A glycan (N-linked (GlcNAc...) asparagine) is linked at Asn-91. (1,3-beta-D-glucosyl)n-binding residues include Asn-156 and Glu-157. Glu-157 acts as the Proton donor in catalysis. Asn-161 carries N-linked (GlcNAc...) asparagine glycosylation. Asp-198 and Arg-203 together coordinate (1,3-beta-D-glucosyl)n. 5 cysteine pairs are disulfide-bonded: Cys-212–Cys-345, Cys-230–Cys-261, Cys-367–Cys-419, Cys-376–Cys-439, and Cys-395–Cys-400. Asn-249 carries an N-linked (GlcNAc...) asparagine glycan. The active-site Nucleophile is the Glu-258. An N-linked (GlcNAc...) asparagine glycan is attached at Asn-279. Tyr-290 is a binding site for (1,3-beta-D-glucosyl)n. Residues Asn-406, Asn-484, Asn-502, and Asn-509 are each glycosylated (N-linked (GlcNAc...) asparagine). The tract at residues Met-490–Ser-515 is disordered. Ser-516 carries the GPI-anchor amidated serine lipid modification. Positions Gly-517–Ile-542 are cleaved as a propeptide — removed in mature form.

Belongs to the glycosyl hydrolase 72 family. In terms of processing, the GPI-anchor is attached to the protein in the endoplasmic reticulum and serves to target the protein to the cell surface. There, the glucosamine-inositol phospholipid moiety is cleaved off and the GPI-modified mannoprotein is covalently attached via its lipidless GPI glycan remnant to the 1,6-beta-glucan of the outer cell wall layer.

The protein localises to the secreted. Its subcellular location is the cell wall. The protein resides in the membrane. Splits internally a 1,3-beta-glucan molecule and transfers the newly generated reducing end (the donor) to the non-reducing end of another 1,3-beta-glucan molecule (the acceptor) forming a 1,3-beta linkage, resulting in the elongation of 1,3-beta-glucan chains in the cell wall. This is 1,3-beta-glucanosyltransferase gas1 (gas1) from Schizosaccharomyces pombe (strain 972 / ATCC 24843) (Fission yeast).